The following is a 223-amino-acid chain: Alpha-S2-casein (223 aa).

The first 15 residues, 1–15 (MKFFIFTCLLAVALA), serve as a signal peptide directing secretion. Phosphoserine is present on residues S23, S24, S25, S72, S73, S74, S77, S145, S147, S151, and S159. The stretch at residues 77–141 (SAEVAPEEVK…AGPFTPTVNR (65 aa)) is a repeat. Residues 159–223 (STEVFTKKTK…TNAIPYVRYL (65 aa)) constitute a repeat.

This sequence belongs to the alpha-casein family. In terms of tissue distribution, mammary gland specific. Secreted in milk.

Its subcellular location is the secreted. Important role in the capacity of milk to transport calcium phosphate. The chain is Alpha-S2-casein (CSN1S2) from Ovis aries (Sheep).